The primary structure comprises 137 residues: Nucleoside diphosphate kinase (137 aa).

6 residues coordinate ATP: lysine 9, phenylalanine 57, arginine 85, threonine 91, arginine 102, and asparagine 112. Histidine 115 (pros-phosphohistidine intermediate) is an active-site residue.

The protein belongs to the NDK family. As to quaternary structure, homotetramer. Requires Mg(2+) as cofactor.

The protein localises to the cytoplasm. It catalyses the reaction a 2'-deoxyribonucleoside 5'-diphosphate + ATP = a 2'-deoxyribonucleoside 5'-triphosphate + ADP. The enzyme catalyses a ribonucleoside 5'-diphosphate + ATP = a ribonucleoside 5'-triphosphate + ADP. Major role in the synthesis of nucleoside triphosphates other than ATP. The ATP gamma phosphate is transferred to the NDP beta phosphate via a ping-pong mechanism, using a phosphorylated active-site intermediate. This is Nucleoside diphosphate kinase from Campylobacter fetus subsp. fetus (strain 82-40).